The sequence spans 149 residues: Large ribosomal subunit protein uL13 (149 aa).

Belongs to the universal ribosomal protein uL13 family. As to quaternary structure, part of the 50S ribosomal subunit.

Its function is as follows. This protein is one of the early assembly proteins of the 50S ribosomal subunit, although it is not seen to bind rRNA by itself. It is important during the early stages of 50S assembly. In Chlorobium phaeovibrioides (strain DSM 265 / 1930) (Prosthecochloris vibrioformis (strain DSM 265)), this protein is Large ribosomal subunit protein uL13.